The primary structure comprises 654 residues: Acetyl-coenzyme A synthetase (654 aa).

CoA contacts are provided by residues 190–193 (RGGK) and T313. ATP contacts are provided by residues 389–391 (GEP), 413–418 (DTWWQT), D504, and R519. S527 serves as a coordination point for CoA. R530 provides a ligand contact to ATP. Positions 541 and 546 each coordinate Mg(2+). N6-acetyllysine is present on K613.

The protein belongs to the ATP-dependent AMP-binding enzyme family. The cofactor is Mg(2+). Post-translationally, acetylated. Deacetylation by the SIR2-homolog deacetylase activates the enzyme.

The enzyme catalyses acetate + ATP + CoA = acetyl-CoA + AMP + diphosphate. Catalyzes the conversion of acetate into acetyl-CoA (AcCoA), an essential intermediate at the junction of anabolic and catabolic pathways. AcsA undergoes a two-step reaction. In the first half reaction, AcsA combines acetate with ATP to form acetyl-adenylate (AcAMP) intermediate. In the second half reaction, it can then transfer the acetyl group from AcAMP to the sulfhydryl group of CoA, forming the product AcCoA. This is Acetyl-coenzyme A synthetase from Leptospira borgpetersenii serovar Hardjo-bovis (strain L550).